The following is a 552-amino-acid chain: Leucine-rich repeat-containing protein 56 (552 aa).

LRR repeat units follow at residues 94–115 (NLIQ…GTSL), 117–138 (HLQV…GSFL), 139–160 (ELKE…CLLE), 161–182 (QLEV…RYLQ), and 186–206 (RLAM…PGPS). Disordered stretches follow at residues 348-375 (APLE…AESC) and 401-435 (QQER…PPRL).

Belongs to the LRRC56 family. As to quaternary structure, interacts with IFT88.

It localises to the cell projection. The protein resides in the cilium. In terms of biological role, required for the assembly of dynein arms. In Mus musculus (Mouse), this protein is Leucine-rich repeat-containing protein 56 (Lrrc56).